A 762-amino-acid chain; its full sequence is Protein PHTF1 (762 aa).

The PHTF domain occupies 6 to 150 (RDAISWYQKK…VHCQIVSTQI (145 aa)). A run of 3 helical transmembrane segments spans residues 77–97 (GLVRVVFFPLFSSWWIQVTSL), 99–119 (IFVWLLLLYLMQVTAIVLYLM), and 121–141 (PIVSVSEVLGPLCLMLLMGTV). A disordered region spans residues 152-184 (RPSGNNGNRRRRKLRKTVNGDGTRDNGNNSPDK). Residues N179 and N224 are each glycosylated (N-linked (GlcNAc...) asparagine). Residues S272, S276, S277, S334, and S336 each carry the phosphoserine modification. The segment at 345–415 (AAFSQGSRSG…NTLHSGTKRD (71 aa)) is disordered. Low complexity predominate over residues 348-364 (SQGSRSGMSGGSRSLNL). Residue N363 is glycosylated (N-linked (GlcNAc...) asparagine). Basic and acidic residues predominate over residues 365–376 (SRRDSESTRHDS). N431 carries an N-linked (GlcNAc...) asparagine glycan. 4 helical membrane-spanning segments follow: residues 473–493 (GVGYQMLGNAVTIGLALFPFL), 515–535 (TLFCGAPPVTPVVILSIINFF), 611–631 (VVVSSVFLLTLSIAFICCAQV), and 645–665 (WEFLIWETALLLFLLRLASLG). Residues N674 and N733 are each glycosylated (N-linked (GlcNAc...) asparagine). A helical membrane pass occupies residues 737-757 (VVILSAVSGVISDLLGFNIRL).

As to quaternary structure, interacts with FEM1B. Highly expressed in testis.

Its subcellular location is the endoplasmic reticulum membrane. It localises to the golgi apparatus. The protein resides in the cis-Golgi network membrane. The sequence is that of Protein PHTF1 from Rattus norvegicus (Rat).